We begin with the raw amino-acid sequence, 156 residues long: Transcription elongation factor GreA (156 aa).

A coiled-coil region spans residues alanine 46 to glutamate 66.

This sequence belongs to the GreA/GreB family.

Necessary for efficient RNA polymerase transcription elongation past template-encoded arresting sites. The arresting sites in DNA have the property of trapping a certain fraction of elongating RNA polymerases that pass through, resulting in locked ternary complexes. Cleavage of the nascent transcript by cleavage factors such as GreA or GreB allows the resumption of elongation from the new 3'terminus. GreA releases sequences of 2 to 3 nucleotides. This Paracoccus denitrificans (strain Pd 1222) protein is Transcription elongation factor GreA.